Here is a 672-residue protein sequence, read N- to C-terminus: Forkhead box protein O3 (672 aa).

Disordered regions lie at residues 1-85 and 110-152; these read MAEA…GVSS and GPAS…CSSR. At S30 the chain carries Phosphoserine. T32 is subject to Phosphothreonine. An N6-methyllysine modification is found at K46. The span at 57–68 shows a compositional bias: acidic residues; sequence IPEEDDDEDDED. A required for mitochondrial import region spans residues 80 to 108; sequence GGGVSSTLGSGLLLEDSAMLLAPGGQDLG. Over residues 110-129 the composition is skewed to low complexity; sequence GPASAAGALSGGTPTQLQPQ. Position 148 is an N6-methyllysine (K148). The segment at residues 156–250 is a DNA-binding region (fork-head); that stretch reads WGNLSYADLI…KSGKAPRRRA (95 aa). T178 is modified (phosphothreonine). Residues S208 and S214 each carry the phosphoserine modification. K229 bears the N6-methyllysine mark. The segment at 230–301 is disordered; it reads SSWWIINPDG…GSPTSRSSDE (72 aa). K241 bears the N6-acetyllysine mark. A Nuclear localization signal motif is present at residues 241 to 258; the sequence is KSGKAPRRRAVSMDNSNK. S252 is subject to Phosphoserine. Basic residues predominate over residues 260 to 271; sequence TKSRGRAAKKKA. K261 and K270 each carry N6-methyllysine. Phosphoserine is present on residues S279 and S283. Positions 282 to 297 are enriched in polar residues; the sequence is DSPSQLSKWPGSPTSR. Residue K289 is modified to N6-methyllysine. Phosphoserine is present on S293. At S298 the chain carries Phosphoserine; by CaMK2A. The mediates interaction with CHUK/IKKA and IKBKB/IKKB stretch occupies residues 299-672; that stretch reads SDELDAWTDF…QASSQSWVPG (374 aa). S310 is subject to Phosphoserine. Residue S314 is modified to Phosphoserine; by SGK1. S398 and S412 each carry phosphoserine; by AMPK. Disordered regions lie at residues 399–441 and 535–583; these read QPSP…SLNS and HQHQ…QTLS. 2 stretches are compositionally biased toward polar residues: residues 409–441 and 548–577; these read RGSSFPYTAKSSGLGSPTGSFNSTVFGPSSLNS and ALSNSVSNMGLSDSSSLGSAKHQQQSPASQ. The residue at position 418 (K418) is an N6-methyllysine. S420 is subject to Phosphoserine. A Phosphoserine; by MAPKAPK5 modification is found at S550. Residue S554 is modified to Phosphoserine; by AMPK and MAPKAPK5. Residues S587 and S625 each carry the phosphoserine; by AMPK modification. S643 bears the Phosphoserine; by IKKB mark.

Upon metabolic stress, forms a complex composed of FOXO3, SIRT3 and mitochondrial RNA polymerase POLRMT; the complex is recruited to mtDNA in a SIRT3-dependent manner. Also forms a complex composed of FOXO3, SIRT3, TFAM and POLRMT. Interacts with SIRT2; the interaction occurs independently of SIRT2 deacetylase activity. Interacts with YWHAB/14-3-3-beta and YWHAZ/14-3-3-zeta, which are required for cytosolic sequestration. Upon oxidative stress, interacts with STK4/MST1, which disrupts interaction with YWHAB/14-3-3-beta and leads to nuclear translocation. Interacts with PIM1. Interacts with DDIT3/CHOP. Interacts (deacetylated form) with SKP2. Interacts with CHUK and IKBKB. Interacts with CAMK2A, CAMK2B and calcineurin A. Interacts with NUPR1; this interaction represses FOXO3 transactivation. Post-translationally, deacetylation by SIRT1 or SIRT2 stimulates interaction of FOXO3 with SKP2 and facilitates SCF(SKP2)-mediated FOXO3 ubiquitination and proteasomal degradation. Deacetylation by SIRT2 stimulates FOXO3-mediated transcriptional activity in response to oxidative stress. Deacetylated by SIRT3. Deacetylation by SIRT3 stimulates FOXO3-mediated mtDNA transcriptional activity in response to metabolic stress. In terms of processing, in the presence of survival factors such as IGF1, phosphorylated on Thr-32 and Ser-252 by AKT1/PKB. This phosphorylated form then interacts with 14-3-3 proteins and is retained in the cytoplasm. Survival factor withdrawal induces dephosphorylation and promotes translocation to the nucleus where the dephosphorylated protein induces transcription of target genes and triggers apoptosis. Although AKT1/PKB doesn't appear to phosphorylate Ser-314 directly, it may activate other kinases that trigger phosphorylation at this residue. Phosphorylated by STK4/MST1 on Ser-208 upon oxidative stress, which leads to dissociation from YWHAB/14-3-3-beta and nuclear translocation. Phosphorylated by PIM1. Phosphorylation by AMPK leads to the activation of transcriptional activity without affecting subcellular localization. Phosphorylated by AMPK on Ser-30 in response to metabolic stress which mediates FOXO3 mitochondrial translocation. Phosphorylation by MAPKAPK5 promotes nuclear localization and DNA-binding, leading to induction of miR-34b and miR-34c expression, 2 post-transcriptional regulators of MYC that bind to the 3'UTR of MYC transcript and prevent its translation. Phosphorylated by CHUK/IKKA and IKBKB/IKKB. TNF-induced inactivation of FOXO3 requires its phosphorylation at Ser-643 by IKBKB/IKKB which promotes FOXO3 retention in the cytoplasm, polyubiquitination and ubiquitin-mediated proteasomal degradation. May be dephosphorylated by calcineurin A on Ser-298 which abolishes FOXO3 transcriptional activity. Phosphorylation at Ser-252 promotes its degradation by the proteasome. Dephosphorylation at Ser-252 by protein phosphatase 2A (PPP2CA) promotes its stabilization; interaction with PPP2CA is enhanced by AMBRA1. Heavily methylated by SET9 which decreases stability, while moderately increasing transcriptional activity. The main methylation site is Lys-270. Methylation doesn't affect subcellular location. Post-translationally, polyubiquitinated. Ubiquitinated by a SCF complex containing SKP2, leading to proteasomal degradation. In terms of processing, the N-terminus is cleaved following import into the mitochondrion. As to expression, expressed in white and brown adipose tissues (at protein level). Expressed in liver, kidney, lung and colon (at protein level). Expressed in skeletal muscles (at protein level).

The protein resides in the cytoplasm. The protein localises to the cytosol. Its subcellular location is the nucleus. It localises to the mitochondrion matrix. It is found in the mitochondrion outer membrane. In terms of biological role, transcriptional activator that recognizes and binds to the DNA sequence 5'-[AG]TAAA[TC]A-3' and regulates different processes, such as apoptosis and autophagy. Acts as a positive regulator of autophagy in skeletal muscle: in starved cells, enters the nucleus following dephosphorylation and binds the promoters of autophagy genes, such as GABARAP1L, MAP1LC3B and ATG12, thereby activating their expression, resulting in proteolysis of skeletal muscle proteins. Triggers apoptosis in the absence of survival factors, including neuronal cell death upon oxidative stress. Participates in post-transcriptional regulation of MYC: following phosphorylation by MAPKAPK5, promotes induction of miR-34b and miR-34c expression, 2 post-transcriptional regulators of MYC that bind to the 3'UTR of MYC transcript and prevent its translation. In response to metabolic stress, translocates into the mitochondria where it promotes mtDNA transcription. Also acts as a key regulator of chondrogenic commitment of skeletal progenitor cells in response to lipid availability: when lipids levels are low, translocates to the nucleus and promotes expression of SOX9, which induces chondrogenic commitment and suppresses fatty acid oxidation. Also acts as a key regulator of regulatory T-cells (Treg) differentiation by activating expression of FOXP3. This Mus musculus (Mouse) protein is Forkhead box protein O3.